The primary structure comprises 321 residues: MADSLAGIDQVTSLHKNNELQLLCFRLGKNKDLYAVNVFKIREVVKYHGNLTIISHENNSLVEGLIIIRELTIPLIDMKKWFYYDSQNKNKDLRPYRIEKEKGEDDIVMICEFSRWTIGVRIYEADRILSKKWTEMEQSAGLGGSAGNNKLVSRTRYFDGRLVQVVDIEKMLIDVFPWIEDEKHNDLETLSKIHSNQCVLLADDSPSVLKTMQMILDKLGVKHIDFINGKTLLEHLFNPTTDVSNIGLIITDLEMPEASGFEVIKQVKNNPLTSKIPIVVNSSMSGSSNEDMARSLKADDFISKSNPKDIQRVVKQFLELA.

In terms of domain architecture, CheW-like spans 19–177 (ELQLLCFRLG…IEKMLIDVFP (159 aa)). The region spanning 198–319 (CVLLADDSPS…IQRVVKQFLE (122 aa)) is the Response regulatory domain. 4-aspartylphosphate is present on Asp252.

Plays an essential role in chemotaxis signal transduction system in order to colonize the host stomach. May act as a phosphate sink to control the flow of phosphate to CheAY. The chain is Chemotaxis protein CheV1 from Helicobacter pylori (strain ATCC 700392 / 26695) (Campylobacter pylori).